A 420-amino-acid chain; its full sequence is S-adenosylmethionine synthase (420 aa).

H16 is an ATP binding site. D18 contacts Mg(2+). E44 is a binding site for K(+). L-methionine contacts are provided by E57 and Q100. Residues Q100–T110 form a flexible loop region. Residues D175 to K177, K251 to F252, D260, R266 to K267, A283, and K287 contribute to the ATP site. D260 serves as a coordination point for L-methionine. Residue K291 coordinates L-methionine.

It belongs to the AdoMet synthase family. In terms of assembly, homotetramer; dimer of dimers. Requires Mg(2+) as cofactor. K(+) is required as a cofactor.

The protein resides in the cytoplasm. The catalysed reaction is L-methionine + ATP + H2O = S-adenosyl-L-methionine + phosphate + diphosphate. It functions in the pathway amino-acid biosynthesis; S-adenosyl-L-methionine biosynthesis; S-adenosyl-L-methionine from L-methionine: step 1/1. Functionally, catalyzes the formation of S-adenosylmethionine (AdoMet) from methionine and ATP. The overall synthetic reaction is composed of two sequential steps, AdoMet formation and the subsequent tripolyphosphate hydrolysis which occurs prior to release of AdoMet from the enzyme. This chain is S-adenosylmethionine synthase, found in Trichormus variabilis (strain ATCC 29413 / PCC 7937) (Anabaena variabilis).